Here is a 227-residue protein sequence, read N- to C-terminus: Uracil-DNA glycosylase (227 aa).

The active-site Proton acceptor is the Asp68.

Belongs to the uracil-DNA glycosylase (UDG) superfamily. UNG family.

The protein localises to the cytoplasm. It catalyses the reaction Hydrolyzes single-stranded DNA or mismatched double-stranded DNA and polynucleotides, releasing free uracil.. Excises uracil residues from the DNA which can arise as a result of misincorporation of dUMP residues by DNA polymerase or due to deamination of cytosine. The protein is Uracil-DNA glycosylase of Mycobacterium leprae (strain Br4923).